The sequence spans 220 residues: Coat protein TP4 (220 aa).

It localises to the virion. The polypeptide is Coat protein TP4 (Thermoproteus tenax (TTV1)).